Consider the following 119-residue polypeptide: MVALESAHLVGAGGALGALCRHYLAGAIQRETFPLGTLTVNAFGSFALGLLTFAGVTGDAALLVGVGACGSFTTFSSFSVETVRLWENGYVALAALNAVGNLACALVGIGLAWGIVRIV.

The helical transmembrane segment at 46 to 66 (FALGLLTFAGVTGDAALLVGV) threads the bilayer. Na(+)-binding residues include Gly-70 and Thr-73. The helical transmembrane segment at 96–116 (LNAVGNLACALVGIGLAWGIV) threads the bilayer.

It belongs to the fluoride channel Fluc/FEX (TC 1.A.43) family.

The protein resides in the cell membrane. It carries out the reaction fluoride(in) = fluoride(out). Na(+) is not transported, but it plays an essential structural role and its presence is essential for fluoride channel function. In terms of biological role, fluoride-specific ion channel. Important for reducing fluoride concentration in the cell, thus reducing its toxicity. In Haloarcula marismortui (strain ATCC 43049 / DSM 3752 / JCM 8966 / VKM B-1809) (Halobacterium marismortui), this protein is Fluoride-specific ion channel FluC 2.